The primary structure comprises 426 residues: tRNA(Ile)-lysidine synthase (426 aa).

19–24 provides a ligand contact to ATP; that stretch reads SGGLDS.

Belongs to the tRNA(Ile)-lysidine synthase family.

It is found in the cytoplasm. It carries out the reaction cytidine(34) in tRNA(Ile2) + L-lysine + ATP = lysidine(34) in tRNA(Ile2) + AMP + diphosphate + H(+). Its function is as follows. Ligates lysine onto the cytidine present at position 34 of the AUA codon-specific tRNA(Ile) that contains the anticodon CAU, in an ATP-dependent manner. Cytidine is converted to lysidine, thus changing the amino acid specificity of the tRNA from methionine to isoleucine. This chain is tRNA(Ile)-lysidine synthase, found in Neisseria meningitidis serogroup A / serotype 4A (strain DSM 15465 / Z2491).